We begin with the raw amino-acid sequence, 305 residues long: MPSSSNSAAFSLDEFAKALDKHDYHAEKGQTVHGKICQHANEGVYVDFGGKSPGFVPVQELGLRPHAEIEDSFPLDSAWDFLVTSEQNDEGQVRLSRRQLQIQQSWENLAELEESGKTLEMVVTGTNKGGVVGDVEGLRGFIPRSHLMHKDNMDALVGQVLKAHILEANQDNNKLVLTQRRIQQAESMGKIAAGNIYEGKVAKIQPYGVFVEIEGVTGLLHVSQVSGTRVDSLNTLFAFGQAISVYVQEIDEYKNRISLSTRILETYPGELVEKFDEMMADAPNRLPLVQSKQNLGDKQEQLEKS.

S1 motif domains are found at residues 29-98 (GQTV…LSRR), 116-180 (GKTL…LTQR), and 194-262 (GNIY…LSTR).

The protein belongs to the bacterial ribosomal protein bS1 family.

Functionally, binds mRNA. This Synechocystis sp. (strain ATCC 27184 / PCC 6803 / Kazusa) protein is Small ribosomal subunit protein bS1B (rps1b).